A 98-amino-acid polypeptide reads, in one-letter code: NADH-ubiquinone oxidoreductase chain 4L (98 aa).

2 helical membrane passes run Leu26–Leu46 and Ile61–Ile81.

Belongs to the complex I subunit 4L family. Core subunit of respiratory chain NADH dehydrogenase (Complex I) which is composed of 45 different subunits.

It is found in the mitochondrion inner membrane. It carries out the reaction a ubiquinone + NADH + 5 H(+)(in) = a ubiquinol + NAD(+) + 4 H(+)(out). Core subunit of the mitochondrial membrane respiratory chain NADH dehydrogenase (Complex I) which catalyzes electron transfer from NADH through the respiratory chain, using ubiquinone as an electron acceptor. Part of the enzyme membrane arm which is embedded in the lipid bilayer and involved in proton translocation. This Macaca nigrescens (Gorontalo macaque) protein is NADH-ubiquinone oxidoreductase chain 4L (MT-ND4L).